The following is a 309-amino-acid chain: Tagatose-6-phosphate kinase (309 aa).

Belongs to the carbohydrate kinase PfkB family. LacC subfamily.

It carries out the reaction D-tagatofuranose 6-phosphate + ATP = D-tagatofuranose 1,6-bisphosphate + ADP + H(+). It functions in the pathway carbohydrate metabolism; D-tagatose 6-phosphate degradation; D-glyceraldehyde 3-phosphate and glycerone phosphate from D-tagatose 6-phosphate: step 1/2. This chain is Tagatose-6-phosphate kinase, found in Streptococcus pneumoniae serotype 19F (strain G54).